Reading from the N-terminus, the 194-residue chain is Protein GrpE 1 (194 aa).

Residues 1 to 22 form a disordered region; sequence MIHNEEEQLEKKIEKNQDPKIN.

This sequence belongs to the GrpE family. Homodimer.

Its subcellular location is the cytoplasm. Participates actively in the response to hyperosmotic and heat shock by preventing the aggregation of stress-denatured proteins, in association with DnaK and GrpE. It is the nucleotide exchange factor for DnaK and may function as a thermosensor. Unfolded proteins bind initially to DnaJ; upon interaction with the DnaJ-bound protein, DnaK hydrolyzes its bound ATP, resulting in the formation of a stable complex. GrpE releases ADP from DnaK; ATP binding to DnaK triggers the release of the substrate protein, thus completing the reaction cycle. Several rounds of ATP-dependent interactions between DnaJ, DnaK and GrpE are required for fully efficient folding. In Buchnera aphidicola subsp. Acyrthosiphon pisum (strain APS) (Acyrthosiphon pisum symbiotic bacterium), this protein is Protein GrpE 1.